Reading from the N-terminus, the 475-residue chain is Ankyrin repeat, SAM and basic leucine zipper domain-containing protein 1 (475 aa).

Positions 1 to 25 (MAASALRGLPVAGGGESSESEDDGW) are disordered. Ser-17, Ser-18, and Ser-20 each carry phosphoserine. 6 ANK repeats span residues 45-74 (EKKEKFKKAMTIGDVSLVQELLDSGISVDS), 78-107 (YGWTPLMYAASVANAELVRVLLDRGANASF), 110-144 (DKQSILITACSAHGSEEQILKCVELLLSRNADPNV), 148-177 (RLMTPIMYAARDGHTQVVALLVAHGAEVNT), 181-210 (NGYTALTWAARQGHKNIVLKLLELGANKML), and 214-243 (DGKMPSEIAKRNKHHEIFNLLSFTLNPLEG). The 63-residue stretch at 272 to 334 (SYTAFGDLEV…KILAALKELQ (63 aa)) folds into the SAM domain.

In terms of assembly, interacts with DDX4, PIWIL1, RANBP9 and TDRD1. Expressed exclusively in the testis and ovary and at higher levels in the adult testis compared with the adult ovary.

It localises to the cytoplasm. Its function is as follows. Plays a central role during spermatogenesis by repressing transposable elements and preventing their mobilization, which is essential for the germline integrity. Acts via the piRNA metabolic process, which mediates the repression of transposable elements during meiosis by forming complexes composed of piRNAs and Piwi proteins and governs the methylation and subsequent repression of transposons. Its association with pi-bodies suggests a participation in the primary piRNAs metabolic process. Required prior to the pachytene stage to facilitate the production of multiple types of piRNAs, including those associated with repeats involved in the regulation of retrotransposons. May act by mediating protein-protein interactions during germ cell maturation. The protein is Ankyrin repeat, SAM and basic leucine zipper domain-containing protein 1 of Homo sapiens (Human).